We begin with the raw amino-acid sequence, 489 residues long: Serine/threonine-protein kinase dyf-5 (489 aa).

A Protein kinase domain is found at 11-291 (YLMTKRLGDG…ANQSLRYKYF (281 aa)). ATP is bound by residues 17-25 (LGDGTFGEV) and K40. D132 serves as the catalytic Proton acceptor. Disordered stretches follow at residues 366–385 (EKSD…KPTA) and 452–489 (QTGP…KYVK). Positions 458-473 (SNQTNNHSANNSHSPN) are enriched in low complexity.

It belongs to the protein kinase superfamily. CMGC Ser/Thr protein kinase family. RCK subfamily. Requires Mg(2+) as cofactor. Expressed in head neurons including amphid and labial sensory neurons and 3 pairs of neurons in the tail including phasmid sensory neurons. In male, expressed in the tail including the sensory rays and the spicule.

The protein resides in the perikaryon. Its subcellular location is the cell projection. It localises to the dendrite. The protein localises to the axon. It is found in the cilium. The catalysed reaction is L-seryl-[protein] + ATP = O-phospho-L-seryl-[protein] + ADP + H(+). The enzyme catalyses L-threonyl-[protein] + ATP = O-phospho-L-threonyl-[protein] + ADP + H(+). Its function is as follows. Serine/threonine-protein kinase which is required for ciliogenesis. Regulates the length and the morphology of sensory neuron cilia. In addition, plays a role in the anterograde intraflagellar transport (IFT) in the cilia by regulating the undocking of kinesin-II motor complex (composed of klp-11, klp-20 and kap-1) before reaching the distal segment and the docking of kinesin motor osm-3 onto IFT cargos. This Caenorhabditis elegans protein is Serine/threonine-protein kinase dyf-5.